Reading from the N-terminus, the 423-residue chain is Pseudouridylate synthase 1 homolog (423 aa).

Residues Ala32 to Arg75 are disordered. Residues Glu57–Gly68 are compositionally biased toward basic and acidic residues. The active-site Nucleophile is Asp142. Residues Ala403 to Asp423 form a disordered region. A phosphoserine mark is found at Ser411 and Ser416. Thr422 is subject to Phosphothreonine.

This sequence belongs to the tRNA pseudouridine synthase TruA family. In terms of assembly, monomer. Forms a complex with RARG and the SRA1 RNA in the nucleus.

Its subcellular location is the nucleus. The protein localises to the cytoplasm. It is found in the mitochondrion. It carries out the reaction a uridine in tRNA = a pseudouridine in tRNA. The enzyme catalyses uridine(38/39/40) in tRNA = pseudouridine(38/39/40) in tRNA. It catalyses the reaction a uridine in mRNA = a pseudouridine in mRNA. In terms of biological role, pseudouridylate synthase that catalyzes pseudouridylation of tRNAs and mRNAs. Acts on positions 27/28 in the anticodon stem and also positions 34 and 36 in the anticodon of an intron containing tRNA. Also catalyzes pseudouridylation of mRNAs: mediates pseudouridylation of mRNAs with the consensus sequence 5'-UGUAG-3'. Acts as a regulator of pre-mRNA splicing by mediating pseudouridylation of pre-mRNAs at locations associated with alternatively spliced regions. Pseudouridylation of pre-mRNAs near splice sites directly regulates mRNA splicing and mRNA 3'-end processing. Involved in regulation of nuclear receptor activity through pseudouridylation of SRA1 mRNA. Its function is as follows. Does not form pseudouridine when expressed in vitro. In Mus musculus (Mouse), this protein is Pseudouridylate synthase 1 homolog.